We begin with the raw amino-acid sequence, 2056 residues long: E3 ubiquitin-protein ligase TRIP12 (2056 aa).

2 stretches are compositionally biased toward polar residues: residues 1-10 (MSSRPNNNPG) and 18-27 (RNTAGAQPQE). Residues 1–440 (MSSRPNNNPG…SGESESDDSE (440 aa)) are disordered. Residues 39–51 (AENKTHSLPESRK) show a composition bias toward basic and acidic residues. Composition is skewed to polar residues over residues 58 to 67 (KVQSNTTSGP) and 153 to 168 (SQEQ…STSK). Composition is skewed to low complexity over residues 213 to 226 (LSKL…SAKA) and 234 to 253 (SSSS…VSAA). Composition is skewed to polar residues over residues 317 to 327 (PGSSKTETSKP) and 363 to 375 (QKTT…TSRR). The segment covering 383–395 (AAAEARRQEKMAD) has biased composition (basic and acidic residues). Positions 415–433 (GAAASSSVAGAVGMTTSGE) are enriched in low complexity. The 115-residue stretch at 791-905 (MLKKGNAQNT…DPELAKSFIK (115 aa)) folds into the WWE domain. The segment covering 1027-1042 (TTISTGSGTASGNSAA) has biased composition (low complexity). Disordered stretches follow at residues 1027–1147 (TTIS…ASKD), 1465–1500 (EEEE…DELW), and 1632–1651 (TNPE…PRLD). The span at 1069 to 1082 (KRKRLPKRGPRRPK) shows a compositional bias: basic residues. The segment covering 1085–1094 (PPRDEDKVDN) has biased composition (basic and acidic residues). Polar residues-rich tracts occupy residues 1095–1106 (QAKSPTTTQSPK) and 1119–1129 (RLSTQSNSNNI). The K-box stretch occupies residues 1560-1634 (EIIPTSEFNN…AMQRLLDTNP (75 aa)). The HECT domain maps to 1949-2056 (PDHGYTHDSR…REGQQSFHLS (108 aa)). Cysteine 2023 (glycyl thioester intermediate) is an active-site residue.

Belongs to the UPL family. K-HECT subfamily.

It is found in the nucleus. The protein localises to the nucleoplasm. It catalyses the reaction S-ubiquitinyl-[E2 ubiquitin-conjugating enzyme]-L-cysteine + [acceptor protein]-L-lysine = [E2 ubiquitin-conjugating enzyme]-L-cysteine + N(6)-ubiquitinyl-[acceptor protein]-L-lysine.. It participates in protein modification; protein ubiquitination. Its function is as follows. E3 ubiquitin-protein ligase involved in ubiquitin fusion degradation (UFD) pathway and regulation of DNA repair. Part of the ubiquitin fusion degradation (UFD) pathway, a process that mediates ubiquitination of protein at their N-terminus, regardless of the presence of lysine residues in target proteins. Acts as a key regulator of DNA damage response by acting as a suppressor of RNF168, an E3 ubiquitin-protein ligase that promotes accumulation of 'Lys-63'-linked histone H2A and H2AX at DNA damage sites, thereby acting as a guard against excessive spreading of ubiquitinated chromatin at damaged chromosomes. This chain is E3 ubiquitin-protein ligase TRIP12 (trip12), found in Xenopus tropicalis (Western clawed frog).